Reading from the N-terminus, the 113-residue chain is UPF0060 membrane protein Mmcs_2513 (113 aa).

A run of 4 helical transmembrane segments spans residues 12 to 32 (ALFV…WQGV), 37 to 57 (GWIW…VAAF), 66 to 86 (ILAA…VVVD), and 92 to 112 (RWDL…MYAP).

This sequence belongs to the UPF0060 family.

It localises to the cell membrane. This is UPF0060 membrane protein Mmcs_2513 from Mycobacterium sp. (strain MCS).